Reading from the N-terminus, the 65-residue chain is Large ribosomal subunit protein bL28 (65 aa).

Belongs to the bacterial ribosomal protein bL28 family.

In Lachnoclostridium phytofermentans (strain ATCC 700394 / DSM 18823 / ISDg) (Clostridium phytofermentans), this protein is Large ribosomal subunit protein bL28.